The primary structure comprises 143 residues: Sporulation-specific cell division protein SsgB (143 aa).

This sequence belongs to the SsgA family. Interacts with SsgA. Interacts with FtsZ (via N-terminus).

It localises to the cell septum. Involved in sporulation-specific cell division. Required for early stages of sporulation. Important in the process of growth cessation prior to sporulation-specific cell division. Recruits cell division protein FtsZ to the future septum sites and tethers the contractile ring structure (Z ring) to the cytoplasmic membrane during sporulation. Stimulates polymerization and filament length of FtsZ in vitro. In Salinispora tropica (strain ATCC BAA-916 / DSM 44818 / JCM 13857 / NBRC 105044 / CNB-440), this protein is Sporulation-specific cell division protein SsgB.